We begin with the raw amino-acid sequence, 627 residues long: MRRPKKYESGEATQYISRRAALRKLQLSLNDFRRLCILKGVYPREPKHRRRAQKGSSEIKVLYHTKDIRFLLHESIVWTLRDYKIFAKKSNRDRAIKDFRNLKRRLALFPEIKLDHIVKERYPTFIDALKDLDDCLTLLFLFSTFPSLHLIPREQSNLCRRLTIEFLHYVIASKSLRKVFISIKGYYFQAEIKGQKVTWIVPHYYPFKPQSRQEVDFKVMSIFVEFYTIMLGFTNFRLFHGLNLAYPPQFPSSVLQDSEESLKDEASFVSDRIAALNFELLRTDKVQEDEEELDIDMELLEQDGDSKRIIKMKQEAQEVSRLRTLFKGLKFFINREVPREPLVILIRSFGGKVSWDSSIFAGSTYDEGDETITHQIVDRPSISTQYISRDYIQPQWVFDCVNQRQLLPTNKYFIGETLPPHLSPFVDSKRDSYIPPEEKALLDPSLIETHVQSDDDSEDEAQEEEETVDQELLDAQLQLAYQQETAEYKKFGGPDGVNEDEEDPEDDDDNEDDDEEEEELDEKTKRLQEEKQKMSVQSGKVHKVNKRQVHKAEVDEHRLQARMVKPRHRNLFRKLIREKQSKEKEEWLLRKKRRTIEASEKEARKTAKREARKEAAAAAAKASKLGK.

Residues 321–414 (RLRTLFKGLK…QLLPTNKYFI (94 aa)) form the BRCT domain. 3 disordered regions span residues 450 to 469 (HVQS…ETVD), 488 to 562 (YKKF…LQAR), and 595 to 627 (TIEA…KLGK). Phosphoserine is present on residues Ser-453 and Ser-457. Acidic residues-rich tracts occupy residues 454-469 (DDDS…ETVD) and 497-521 (VNED…EELD). Residues 507–538 (DDDNEDDDEEEEELDEKTKRLQEEKQKMSVQS) are a coiled coil. Basic and acidic residues predominate over residues 522-533 (EKTKRLQEEKQK). Residues 540–549 (KVHKVNKRQV) show a composition bias toward basic residues. Composition is skewed to basic and acidic residues over residues 550–559 (HKAEVDEHRL) and 595–615 (TIEA…RKEA). Residues 582–625 (KEKEEWLLRKKRRTIEASEKEARKTAKREARKEAAAAAAKASKL) are a coiled coil. The span at 616–627 (AAAAAKASKLGK) shows a compositional bias: low complexity.

Belongs to the pescadillo family.

It is found in the nucleus. It localises to the nucleolus. The protein resides in the nucleoplasm. Functionally, required for maturation of ribosomal RNAs and formation of the large ribosomal subunit. This chain is Pescadillo homolog, found in Drosophila sechellia (Fruit fly).